Reading from the N-terminus, the 180-residue chain is Nucleoside triphosphate/diphosphate phosphatase (180 aa).

The active-site Proton donor is the Arg-26. Mg(2+) is bound by residues Asn-90, Asp-106, Asp-108, Asp-110, Asp-123, and Glu-126.

Belongs to the Ntdp family. Requires Mg(2+) as cofactor.

The enzyme catalyses a ribonucleoside 5'-triphosphate + H2O = a ribonucleoside 5'-diphosphate + phosphate + H(+). The catalysed reaction is a ribonucleoside 5'-diphosphate + H2O = a ribonucleoside 5'-phosphate + phosphate + H(+). In terms of biological role, has nucleoside phosphatase activity towards nucleoside triphosphates and nucleoside diphosphates. The sequence is that of Nucleoside triphosphate/diphosphate phosphatase from Staphylococcus epidermidis (strain ATCC 35984 / DSM 28319 / BCRC 17069 / CCUG 31568 / BM 3577 / RP62A).